A 588-amino-acid chain; its full sequence is Probable urocanate hydratase (588 aa).

A compositionally biased stretch (low complexity) spans 1–15 (MDTPSAAAETSEPSA). Residues 1–22 (MDTPSAAAETSEPSAQWQAYRG) form a disordered region. Residues 62 to 63 (GG), Q140, 188 to 190 (GMG), E208, R213, 254 to 255 (NA), 275 to 279 (QTSAH), and Y334 each bind NAD(+). The active site involves C431. G520 lines the NAD(+) pocket.

Belongs to the urocanase family. NAD(+) is required as a cofactor.

It is found in the cytoplasm. The enzyme catalyses 4-imidazolone-5-propanoate = trans-urocanate + H2O. Its pathway is amino-acid degradation; L-histidine degradation into L-glutamate; N-formimidoyl-L-glutamate from L-histidine: step 2/3. Its function is as follows. Catalyzes the conversion of urocanate to 4-imidazolone-5-propionate. The protein is Probable urocanate hydratase of Halobacterium salinarum (strain ATCC 29341 / DSM 671 / R1).